The chain runs to 1324 residues: Myotubularin-related protein DDB_G0290005 (1324 aa).

The disordered stretch occupies residues 140-276 (KYHDNTTPNN…TSSTNGNCST (137 aa)). Low complexity predominate over residues 144–180 (NTTPNNNNNNNNNNNNNNNNTNNNNNNNINKSNNSST). Residues 181 to 194 (DQLNSFSLEKQPSQ) show a composition bias toward polar residues. The span at 195 to 222 (NENLNNNNNNNNNNNNGNNNINNNNLMN) shows a compositional bias: low complexity. Residues 223–247 (SLTQPSTSSRSRLLKSNSTPINLNE) show a composition bias toward polar residues. A compositionally biased stretch (low complexity) spans 248-276 (SSTSTNSPTLSSTTTTTTTTSSTNGNCST). The Myotubularin phosphatase domain maps to 349-807 (GWLFYDPIEE…KGVQLWSDYF (459 aa)). Substrate contacts are provided by residues 514–515 (NI), 575–581 (CIDGWDR), and R621. The Phosphocysteine intermediate role is filled by C575. Disordered stretches follow at residues 624-664 (QSIS…TTTS), 841-1043 (QKKK…QQQE), 1066-1110 (EQQE…QQQT), 1144-1213 (RKQE…LTMP), and 1232-1296 (LHPN…DNTS). Low complexity-rich tracts occupy residues 625–664 (SISS…TTTS) and 852–864 (GASG…SGSS). Positions 865-882 (SKHHHHHHHHHHHHHHRK) are enriched in basic residues. The segment covering 883 to 894 (STDEKDSKEKSS) has biased composition (basic and acidic residues). Composition is skewed to low complexity over residues 899 to 914 (SRTS…STSS) and 927 to 973 (TITT…TTTP). The segment covering 988–1002 (DKLKSPSGDDIKQEQ) has biased composition (basic and acidic residues). Polar residues predominate over residues 1005 to 1024 (MNQFTSQHPNNQMESSSEIN). Residues 1020–1195 (SSEINQQNEQ…LEQQKPKADI (176 aa)) are a coiled coil. Residues 1025–1043 (QQNEQSQLEQQQEQQQQQE) are compositionally biased toward low complexity. A compositionally biased stretch (polar residues) spans 1079–1090 (PNETITYSMESD). Residues 1091–1109 (SQSSISQNQNQLQQQQQQQ) are compositionally biased toward low complexity. Residues 1144-1193 (RKQEKEKRKLEKEKKQKERAERKLEKEKKRDQKEREQKEKELLEQQKPKA) are compositionally biased toward basic and acidic residues. A compositionally biased stretch (polar residues) spans 1234 to 1243 (PNLSDQNSQT). Composition is skewed to low complexity over residues 1244 to 1258 (NSSG…NSPN) and 1265 to 1294 (SNLS…NNDN).

The protein belongs to the protein-tyrosine phosphatase family. Non-receptor class myotubularin subfamily.

Its subcellular location is the cytoplasm. Its function is as follows. Phosphatase that acts on lipids with a phosphoinositol headgroup. The protein is Myotubularin-related protein DDB_G0290005 of Dictyostelium discoideum (Social amoeba).